A 308-amino-acid polypeptide reads, in one-letter code: Ornithine carbamoyltransferase (308 aa).

Residues 55–58 (STRT), Gln-82, Arg-106, and 133–136 (HPCQ) each bind carbamoyl phosphate. L-ornithine-binding positions include Asn-164, Asp-227, and 231-232 (SM). Carbamoyl phosphate is bound by residues 267–268 (CL) and Arg-295.

Belongs to the aspartate/ornithine carbamoyltransferase superfamily. OTCase family.

Its subcellular location is the cytoplasm. The enzyme catalyses carbamoyl phosphate + L-ornithine = L-citrulline + phosphate + H(+). It participates in amino-acid biosynthesis; L-arginine biosynthesis; L-arginine from L-ornithine and carbamoyl phosphate: step 1/3. In terms of biological role, reversibly catalyzes the transfer of the carbamoyl group from carbamoyl phosphate (CP) to the N(epsilon) atom of ornithine (ORN) to produce L-citrulline. The chain is Ornithine carbamoyltransferase from Prochlorococcus marinus (strain MIT 9312).